Consider the following 254-residue polypeptide: UPF0246 protein FTN_1542 (254 aa).

The protein belongs to the UPF0246 family.

The protein is UPF0246 protein FTN_1542 of Francisella tularensis subsp. novicida (strain U112).